The chain runs to 218 residues: Pyridoxine/pyridoxamine 5'-phosphate oxidase (218 aa).

Substrate-binding positions include 14–17 (RREY) and Lys-72. Residues 67-72 (RIVLLK), 82-83 (YT), Arg-88, Lys-89, and Gln-111 contribute to the FMN site. Substrate contacts are provided by Tyr-129, Arg-133, and Ser-137. Residues 146–147 (QS) and Trp-191 each bind FMN. Residue 197–199 (RLH) participates in substrate binding. Arg-201 contacts FMN.

Belongs to the pyridoxamine 5'-phosphate oxidase family. As to quaternary structure, homodimer. FMN serves as cofactor.

It catalyses the reaction pyridoxamine 5'-phosphate + O2 + H2O = pyridoxal 5'-phosphate + H2O2 + NH4(+). The enzyme catalyses pyridoxine 5'-phosphate + O2 = pyridoxal 5'-phosphate + H2O2. The protein operates within cofactor metabolism; pyridoxal 5'-phosphate salvage; pyridoxal 5'-phosphate from pyridoxamine 5'-phosphate: step 1/1. It functions in the pathway cofactor metabolism; pyridoxal 5'-phosphate salvage; pyridoxal 5'-phosphate from pyridoxine 5'-phosphate: step 1/1. In terms of biological role, catalyzes the oxidation of either pyridoxine 5'-phosphate (PNP) or pyridoxamine 5'-phosphate (PMP) into pyridoxal 5'-phosphate (PLP). The polypeptide is Pyridoxine/pyridoxamine 5'-phosphate oxidase (Escherichia coli O45:K1 (strain S88 / ExPEC)).